A 64-amino-acid polypeptide reads, in one-letter code: Carnocyclin-A (64 aa).

Positions 1–4 are excised as a propeptide; that stretch reads MLYE. Positions 5 to 64 form a cross-link, cyclopeptide (Leu-Leu); the sequence is LVAYGIAQGTAEKVVSLINAGLTVGSIISILGGVTVGLSGVFTAVKAAIAKQGIKKAIQL.

Its subcellular location is the secreted. Its function is as follows. Cyclopeptide antibiotic that inhibits the growth of Gram-positive bacteria, but has no effect on the growth of Gram-negative bacteria. This chain is Carnocyclin-A, found in Carnobacterium maltaromaticum (Carnobacterium piscicola).